Reading from the N-terminus, the 78-residue chain is Large ribosomal subunit protein bL28 (78 aa).

The protein belongs to the bacterial ribosomal protein bL28 family.

The sequence is that of Large ribosomal subunit protein bL28 from Microcystis aeruginosa (strain NIES-843 / IAM M-2473).